We begin with the raw amino-acid sequence, 283 residues long: Polyamine aminopropyltransferase (283 aa).

The PABS domain maps to 5–238 (PTWIDEYHKG…GIWSWTFASD (234 aa)). Residue Gln-32 participates in S-methyl-5'-thioadenosine binding. Spermidine is bound by residues His-63 and Asp-87. S-methyl-5'-thioadenosine-binding positions include Glu-107 and 139–140 (DG). The active-site Proton acceptor is Asp-158. Residue 158-161 (DCSD) participates in spermidine binding.

This sequence belongs to the spermidine/spermine synthase family. Homodimer or homotetramer.

The protein localises to the cytoplasm. The enzyme catalyses S-adenosyl 3-(methylsulfanyl)propylamine + putrescine = S-methyl-5'-thioadenosine + spermidine + H(+). Its pathway is amine and polyamine biosynthesis; spermidine biosynthesis; spermidine from putrescine: step 1/1. In terms of biological role, catalyzes the irreversible transfer of a propylamine group from the amino donor S-adenosylmethioninamine (decarboxy-AdoMet) to putrescine (1,4-diaminobutane) to yield spermidine. In Prochlorococcus marinus subsp. pastoris (strain CCMP1986 / NIES-2087 / MED4), this protein is Polyamine aminopropyltransferase.